The chain runs to 540 residues: Chaperonin GroEL (540 aa).

ATP-binding positions include 30–33, lysine 51, 87–91, glycine 415, 479–481, and aspartate 495; these read TLGP, DGTTT, and NAA.

This sequence belongs to the chaperonin (HSP60) family. In terms of assembly, forms a cylinder of 14 subunits composed of two heptameric rings stacked back-to-back. Interacts with the co-chaperonin GroES.

It localises to the cytoplasm. The catalysed reaction is ATP + H2O + a folded polypeptide = ADP + phosphate + an unfolded polypeptide.. Its function is as follows. Together with its co-chaperonin GroES, plays an essential role in assisting protein folding. The GroEL-GroES system forms a nano-cage that allows encapsulation of the non-native substrate proteins and provides a physical environment optimized to promote and accelerate protein folding. In Pectobacterium carotovorum subsp. carotovorum (Erwinia carotovora subsp. carotovora), this protein is Chaperonin GroEL.